Reading from the N-terminus, the 441-residue chain is Putative F-box protein At1g33530 (441 aa).

Positions 91–137 (TTLAVELPDVLVEEILQRLPVKYLVRLKSISKGWKSLIESDHLAEKH) constitute an F-box domain.

In Arabidopsis thaliana (Mouse-ear cress), this protein is Putative F-box protein At1g33530.